A 111-amino-acid polypeptide reads, in one-letter code: MQFGADTEFSNMCGVTLMNTPIGRVVADVMGAKDGVELTEYPSMIRVDGVNRLDFDYDELTDALGQDFDGSIFEEISSTHYGRMVHLDDKTILFASPEDAAEFIGFDLTAS.

Belongs to the TmoD/XamoD family. The propane 2-monooxygenase multicomponent enzyme system is composed of an electron transfer component and a monooxygenase component interacting with the effector protein PrmD. The electron transfer component is composed of a reductase (PrmB), and the monooxygenase component is formed by a large subunit (PrmA) and a small subunit (PrmC).

Effector component of the propane 2-monooxygenase multicomponent enzyme system which is involved in the degradation of propane via the O2-dependent hydroxylation of propane. The polypeptide is Propane 2-monooxygenase, effector component (Gordonia sp. (strain TY-5)).